We begin with the raw amino-acid sequence, 712 residues long: Zinc finger and BTB domain-containing protein 39 (712 aa).

The BTB domain maps to 30-96 (CDVTIVVGSR…VYTSELFTDL (67 aa)). Disordered stretches follow at residues 129–162 (ARAK…LRGG), 176–224 (SDAG…IPSM), and 236–260 (GIQT…KNSF). The segment covering 134-147 (LTSTSESHSGTLSC) has biased composition (polar residues). Residue Lys-183 forms a Glycyl lysine isopeptide (Lys-Gly) (interchain with G-Cter in SUMO2) linkage. The C2H2-type 1 zinc finger occupies 372 to 394 (GNCKVCETHFQDRNSRVTHVLSH). Residues 400–422 (FSCDMCETKFFTQWQLTLHRRDG) form a C2H2-type 2; atypical zinc finger. Lys-439 is covalently cross-linked (Glycyl lysine isopeptide (Lys-Gly) (interchain with G-Cter in SUMO2)). The segment at 480–502 (QACSVCDQRHLNLCSLMWHTLSH) adopts a C2H2-type 3; atypical zinc-finger fold. 4 C2H2-type zinc fingers span residues 508 to 530 (FSCS…MAVH), 538 to 560 (FHCR…VSQH), 605 to 627 (YSCK…RRIH), and 633 to 655 (YQCK…LKTH). Residues 661–683 (YRCTVCGHYSSTLNLMSKHVGVH) form a C2H2-type 8; atypical zinc finger.

The protein belongs to the krueppel C2H2-type zinc-finger protein family.

It localises to the nucleus. May be involved in transcriptional regulation. The chain is Zinc finger and BTB domain-containing protein 39 (ZBTB39) from Homo sapiens (Human).